The chain runs to 217 residues: ATP phosphoribosyltransferase (217 aa).

Belongs to the ATP phosphoribosyltransferase family. Short subfamily. Heteromultimer composed of HisG and HisZ subunits.

The protein localises to the cytoplasm. The catalysed reaction is 1-(5-phospho-beta-D-ribosyl)-ATP + diphosphate = 5-phospho-alpha-D-ribose 1-diphosphate + ATP. It functions in the pathway amino-acid biosynthesis; L-histidine biosynthesis; L-histidine from 5-phospho-alpha-D-ribose 1-diphosphate: step 1/9. Functionally, catalyzes the condensation of ATP and 5-phosphoribose 1-diphosphate to form N'-(5'-phosphoribosyl)-ATP (PR-ATP). Has a crucial role in the pathway because the rate of histidine biosynthesis seems to be controlled primarily by regulation of HisG enzymatic activity. The protein is ATP phosphoribosyltransferase of Burkholderia orbicola (strain MC0-3).